A 486-amino-acid polypeptide reads, in one-letter code: Glutamate--tRNA ligase (486 aa).

The short motif at 11-21 (PSPTGLLHIGN) is the 'HIGH' region element. The short motif at 255 to 259 (KLSKR) is the 'KMSKS' region element. K258 contributes to the ATP binding site.

Belongs to the class-I aminoacyl-tRNA synthetase family. Glutamate--tRNA ligase type 1 subfamily. As to quaternary structure, monomer.

The protein localises to the cytoplasm. It carries out the reaction tRNA(Glu) + L-glutamate + ATP = L-glutamyl-tRNA(Glu) + AMP + diphosphate. In terms of biological role, catalyzes the attachment of glutamate to tRNA(Glu) in a two-step reaction: glutamate is first activated by ATP to form Glu-AMP and then transferred to the acceptor end of tRNA(Glu). The chain is Glutamate--tRNA ligase from Streptococcus pneumoniae serotype 19F (strain G54).